The chain runs to 334 residues: GTPase Obg (334 aa).

One can recognise an Obg domain in the interval 1 to 159 (MRFVDEVVIK…KEVRLELNLL (159 aa)). The 172-residue stretch at 160–331 (ADVALLGLPN…LAKKLNEFLQ (172 aa)) folds into the OBG-type G domain. GTP-binding positions include 166–173 (GLPNAGKS), 191–195 (FTTMY), 212–215 (DIPG), 282–285 (NKID), and 312–314 (SAA). 2 residues coordinate Mg(2+): Ser173 and Thr193.

The protein belongs to the TRAFAC class OBG-HflX-like GTPase superfamily. OBG GTPase family. As to quaternary structure, monomer. Mg(2+) serves as cofactor.

The protein localises to the cytoplasm. In terms of biological role, an essential GTPase which binds GTP, GDP and possibly (p)ppGpp with moderate affinity, with high nucleotide exchange rates and a fairly low GTP hydrolysis rate. Plays a role in control of the cell cycle, stress response, ribosome biogenesis and in those bacteria that undergo differentiation, in morphogenesis control. The protein is GTPase Obg of Francisella tularensis subsp. tularensis (strain WY96-3418).